A 218-amino-acid polypeptide reads, in one-letter code: Guanylate kinase (218 aa).

The 180-residue stretch at 14–193 (GVMLVLSSPS…AFASVRAIVS (180 aa)) folds into the Guanylate kinase-like domain. An ATP-binding site is contributed by 21-28 (SPSGAGKS).

It belongs to the guanylate kinase family.

Its subcellular location is the cytoplasm. The enzyme catalyses GMP + ATP = GDP + ADP. Its function is as follows. Essential for recycling GMP and indirectly, cGMP. The protein is Guanylate kinase of Chelativorans sp. (strain BNC1).